The chain runs to 271 residues: Probable redox regulatory protein SCO3349 (271 aa).

2 disordered regions span residues 1–21 (MPKT…KHIA) and 109–130 (AEGT…TRPF). Positions 7–21 (AKDEKSAKKDKKHIA) are enriched in basic and acidic residues.

Belongs to the Rv0495c family.

Essential for maintaining intracellular redox homeostasis. This chain is Probable redox regulatory protein SCO3349, found in Streptomyces coelicolor (strain ATCC BAA-471 / A3(2) / M145).